An 89-amino-acid chain; its full sequence is Putative regulatory protein RBAM_015500 (89 aa).

It belongs to the RemA family.

This is Putative regulatory protein RBAM_015500 from Bacillus velezensis (strain DSM 23117 / BGSC 10A6 / LMG 26770 / FZB42) (Bacillus amyloliquefaciens subsp. plantarum).